A 416-amino-acid polypeptide reads, in one-letter code: CinA-like protein (416 aa).

This sequence belongs to the CinA family.

This chain is CinA-like protein, found in Rippkaea orientalis (strain PCC 8801 / RF-1) (Cyanothece sp. (strain PCC 8801)).